A 102-amino-acid chain; its full sequence is uncharacterized protein (102 aa).

The chain crosses the membrane as a helical span at residues 27 to 47; that stretch reads TISLVSAGLLEEIFLLFGLTF.

Its subcellular location is the membrane. This is an uncharacterized protein from Saccharomyces cerevisiae (strain ATCC 204508 / S288c) (Baker's yeast).